A 177-amino-acid polypeptide reads, in one-letter code: Protein SPMIP1 (177 aa).

Residues 47–80 (SRLPRKLPTLLPQASVAPPPPASKTTPSKAPSPA) are disordered.

The chain is Protein SPMIP1 (Spmip1) from Mus musculus (Mouse).